A 688-amino-acid polypeptide reads, in one-letter code: Glycine--tRNA ligase beta subunit (688 aa).

It belongs to the class-II aminoacyl-tRNA synthetase family. Tetramer of two alpha and two beta subunits.

It localises to the cytoplasm. It catalyses the reaction tRNA(Gly) + glycine + ATP = glycyl-tRNA(Gly) + AMP + diphosphate. The chain is Glycine--tRNA ligase beta subunit from Psychromonas ingrahamii (strain DSM 17664 / CCUG 51855 / 37).